Reading from the N-terminus, the 407-residue chain is Carbamoyl phosphate synthase small chain (407 aa).

The tract at residues 1 to 205 (MTETTPKTAP…LQDGYGEQDA (205 aa)) is CPSase. Residues S60, G257, and G259 each coordinate L-glutamine. The Glutamine amidotransferase type-1 domain maps to 209 to 397 (HVVALDFGVK…INLIRERKGQ (189 aa)). The active-site Nucleophile is C286. L-glutamine is bound by residues L287, Q290, N328, G330, and F331. Catalysis depends on residues H370 and E372.

The protein belongs to the CarA family. In terms of assembly, composed of two chains; the small (or glutamine) chain promotes the hydrolysis of glutamine to ammonia, which is used by the large (or ammonia) chain to synthesize carbamoyl phosphate. Tetramer of heterodimers (alpha,beta)4.

It catalyses the reaction hydrogencarbonate + L-glutamine + 2 ATP + H2O = carbamoyl phosphate + L-glutamate + 2 ADP + phosphate + 2 H(+). The catalysed reaction is L-glutamine + H2O = L-glutamate + NH4(+). Its pathway is amino-acid biosynthesis; L-arginine biosynthesis; carbamoyl phosphate from bicarbonate: step 1/1. The protein operates within pyrimidine metabolism; UMP biosynthesis via de novo pathway; (S)-dihydroorotate from bicarbonate: step 1/3. Functionally, small subunit of the glutamine-dependent carbamoyl phosphate synthetase (CPSase). CPSase catalyzes the formation of carbamoyl phosphate from the ammonia moiety of glutamine, carbonate, and phosphate donated by ATP, constituting the first step of 2 biosynthetic pathways, one leading to arginine and/or urea and the other to pyrimidine nucleotides. The small subunit (glutamine amidotransferase) binds and cleaves glutamine to supply the large subunit with the substrate ammonia. The protein is Carbamoyl phosphate synthase small chain of Brucella abortus (strain S19).